The primary structure comprises 351 residues: Probable glucuronosyltransferase Os10g0205300 (351 aa).

The Cytoplasmic portion of the chain corresponds to methionine 1–proline 11. The helical; Signal-anchor for type II membrane protein transmembrane segment at isoleucine 12–phenylalanine 32 threads the bilayer. Over alanine 33–leucine 351 the chain is Lumenal. Residues serine 138 to asparagine 169 form a disordered region. Residues glutamine 156 to asparagine 169 show a composition bias toward basic and acidic residues. N-linked (GlcNAc...) asparagine glycosylation occurs at asparagine 259.

Belongs to the glycosyltransferase 43 family.

Its subcellular location is the golgi apparatus membrane. Involved in the synthesis of glucuronoxylan hemicellulose in secondary cell walls. In Oryza sativa subsp. japonica (Rice), this protein is Probable glucuronosyltransferase Os10g0205300.